The sequence spans 260 residues: Hydroxyethylthiazole kinase 1 (260 aa).

Met-39 is a binding site for substrate. Arg-115 and Thr-160 together coordinate ATP. Gly-187 lines the substrate pocket.

This sequence belongs to the Thz kinase family. The cofactor is Mg(2+).

The catalysed reaction is 5-(2-hydroxyethyl)-4-methylthiazole + ATP = 4-methyl-5-(2-phosphooxyethyl)-thiazole + ADP + H(+). The protein operates within cofactor biosynthesis; thiamine diphosphate biosynthesis; 4-methyl-5-(2-phosphoethyl)-thiazole from 5-(2-hydroxyethyl)-4-methylthiazole: step 1/1. Its function is as follows. Catalyzes the phosphorylation of the hydroxyl group of 4-methyl-5-beta-hydroxyethylthiazole (THZ). The polypeptide is Hydroxyethylthiazole kinase 1 (Streptococcus pneumoniae (strain P1031)).